Reading from the N-terminus, the 539-residue chain is Sorting nexin-27 (539 aa).

Residues 1 to 40 are disordered; the sequence is MADEDGEGIHPSAPHRNGGGGGGSGLHCAGNGGGGGGGPR. A compositionally biased stretch (gly residues) spans 17–39; that stretch reads NGGGGGGSGLHCAGNGGGGGGGP. In terms of domain architecture, PDZ spans 41 to 134; that stretch reads VVRIVKSESG…ELILTVLSVP (94 aa). 2 positions are modified to phosphoserine: S49 and S60. Residues 159-267 enclose the PX domain; sequence QAVPISVPTY…EFLSESDENY (109 aa). One can recognise a Ras-associating domain in the interval 271–360; the sequence is SDVELRVALP…TCLTIRKWLF (90 aa). The tract at residues 271-360 is FERM-like region F1; sequence SDVELRVALP…TCLTIRKWLF (90 aa). An FERM-like region F2 region spans residues 371–419; that stretch reads NDLAVTYFFHQAVDDVKKGYIKAEEKSYQLQKLHEQRKMVMYLNMLRTC. The FERM-like region F3 stretch occupies residues 423–523; it reads NEIIFPHCAC…RVFCELKWRK (101 aa).

In terms of assembly, core component of the SNX27-retromer, a multiprotein complex composed of SNX27, the WASH complex and the retromer complex. Interacts (via the FERM-like regions) with the WASH complex. Interacts with SNX1. Interacts with CYTIP. Interacts with DGKZ. Interacts with MCC. Interacts (via PDZ domain) with a number of target transmembrane proteins (via PDZ-binding motif): ABCC4, ADRB2, ARHGEF7, GRIA1, GRIA2, GRIN1, GRIN2A GRIN2C, KCNJ6, KCNJ9 and SLC2A1/GLUT1. Interacts (via PDZ domains) with SLC9A3; directs SLC9A3 membrane insertion from early endosomes to the plasma membrane. As to expression, expressed in cells of hematopoietic origin.

The protein localises to the early endosome membrane. The protein resides in the cytoplasm. It is found in the cytosol. In terms of biological role, involved in the retrograde transport from endosome to plasma membrane, a trafficking pathway that promotes the recycling of internalized transmembrane proteins. Following internalization, endocytosed transmembrane proteins are delivered to early endosomes and recycled to the plasma membrane instead of being degraded in lysosomes. SNX27 specifically binds and directs sorting of a subset of transmembrane proteins containing a PDZ-binding motif at the C-terminus: following interaction with target transmembrane proteins, associates with the retromer complex, preventing entry into the lysosomal pathway, and promotes retromer-tubule based plasma membrane recycling. SNX27 also binds with the WASH complex. Interacts with membranes containing phosphatidylinositol-3-phosphate (PtdIns(3P)). May participate in establishment of natural killer cell polarity. Recruits CYTIP to early endosomes. The polypeptide is Sorting nexin-27 (Snx27) (Mus musculus (Mouse)).